The chain runs to 229 residues: uncharacterized protein (229 aa).

7 consecutive transmembrane segments (helical) span residues 1 to 21, 32 to 52, 58 to 78, 100 to 120, 139 to 159, 178 to 198, and 206 to 226; these read MFGT…GGIF, ILMQ…ITQH, YPIL…IINL, TAVL…EAAL, IVLA…LFSW, LINE…LSIL, and LNLL…HAFG.

It localises to the cell membrane. This is an uncharacterized protein from Bacillus subtilis (strain 168).